A 156-amino-acid polypeptide reads, in one-letter code: Small ribosomal subunit protein uS7 (156 aa).

Belongs to the universal ribosomal protein uS7 family. Part of the 30S ribosomal subunit. Contacts proteins S9 and S11.

Its function is as follows. One of the primary rRNA binding proteins, it binds directly to 16S rRNA where it nucleates assembly of the head domain of the 30S subunit. Is located at the subunit interface close to the decoding center, probably blocks exit of the E-site tRNA. In Novosphingobium aromaticivorans (strain ATCC 700278 / DSM 12444 / CCUG 56034 / CIP 105152 / NBRC 16084 / F199), this protein is Small ribosomal subunit protein uS7.